A 301-amino-acid polypeptide reads, in one-letter code: Acetylglutamate kinase (301 aa).

Residues 64 to 65, arginine 86, and asparagine 181 contribute to the substrate site; that span reads GG.

This sequence belongs to the acetylglutamate kinase family. ArgB subfamily.

The protein localises to the cytoplasm. The enzyme catalyses N-acetyl-L-glutamate + ATP = N-acetyl-L-glutamyl 5-phosphate + ADP. Its pathway is amino-acid biosynthesis; L-arginine biosynthesis; N(2)-acetyl-L-ornithine from L-glutamate: step 2/4. Functionally, catalyzes the ATP-dependent phosphorylation of N-acetyl-L-glutamate. This chain is Acetylglutamate kinase, found in Aliarcobacter butzleri (strain RM4018) (Arcobacter butzleri).